A 245-amino-acid chain; its full sequence is Carboxymethylenebutenolidase homolog (245 aa).

A2 bears the N-acetylalanine mark. An N6-acetyllysine modification is found at K36. Active-site residues include C132, D179, and H212. S223 is subject to Phosphoserine.

This sequence belongs to the dienelactone hydrolase family. In terms of tissue distribution, widely expressed, with highest levels in liver, followed by kidney, small intestine and colon. Present in liver and intestine (at protein level).

The protein resides in the cytoplasm. It is found in the cytosol. Strongly inhibited by p-chloromercuribenzoate (PCMB). Partially inhibited by bis-p-nitrophenylphosphate (BNPP). Not inhibited by DFP, PMSF, eserine or EDTA. Its function is as follows. Cysteine hydrolase. Can convert the prodrug olmesartan medoxomil into its pharmacologically active metabolite olmerstatan, an angiotensin receptor blocker, in liver and intestine. May also activate beta-lactam antibiotics faropenem medoxomil and lenampicillin. This chain is Carboxymethylenebutenolidase homolog (CMBL), found in Homo sapiens (Human).